The sequence spans 345 residues: CRISPR-associated endonuclease Cas1 1 (345 aa).

Residues E168, H239, and E254 each coordinate a divalent metal cation.

The protein belongs to the CRISPR-associated endonuclease Cas1 family. As to quaternary structure, forms a heterotetramer with a Cas2 homodimer. Homodimer. It depends on a divalent metal cation as a cofactor.

Functionally, CRISPR (clustered regularly interspaced short palindromic repeat), is an adaptive immune system that provides protection against mobile genetic elements (viruses, transposable elements and conjugative plasmids). CRISPR clusters contain sequences complementary to antecedent mobile elements and target invading nucleic acids. CRISPR clusters are transcribed and processed into CRISPR RNA (crRNA). Involved in the integration of spacer DNA into the CRISPR cassette. Acts as a dsDNA and ssRNA nuclease, binds to linear and circular dsDNA and linear ssRNA and ssDNA. In Archaeoglobus fulgidus (strain ATCC 49558 / DSM 4304 / JCM 9628 / NBRC 100126 / VC-16), this protein is CRISPR-associated endonuclease Cas1 1.